A 778-amino-acid chain; its full sequence is Serine/threonine-protein kinase BRSK1 (778 aa).

Residues 1–12 show a composition bias toward gly residues; the sequence is MSSGSKEGGGGS. Residues 1–29 form a disordered region; it reads MSSGSKEGGGGSPAYHLPHPHPHPPQHAQ. Residues 34-285 enclose the Protein kinase domain; it reads YRLEKTLGKG…LEQIQKHPWY (252 aa). ATP is bound by residues 40 to 48 and Lys63; that span reads LGKGQTGLV. The Proton acceptor role is filled by Asp156. The residue at position 189 (Thr189) is a Phosphothreonine; by LKB1. Residues 314–356 form the UBA domain; it reads ELDPDVLESMASLGCFRDRERLHRELRSEEENQEKMIYYLLLD. Positions 362 to 383 are enriched in basic and acidic residues; the sequence is PSCEDQDLPPRNDVDPPRKRVD. The disordered stretch occupies residues 362–548; the sequence is PSCEDQDLPP…SPGGGVGGAA (187 aa). Phosphoserine occurs at positions 399, 443, 447, and 450. The span at 430–457 shows a compositional bias: low complexity; it reads SRSVSGASTGLSSSPLSSPRSPVFSFSP. Arg466, Arg481, Arg484, and Arg498 each carry omega-N-methylarginine. The segment covering 491 to 508 has biased composition (pro residues); that stretch reads QPPPPSARSTPLPGPPGS. Ser508 carries the post-translational modification Phosphoserine. The span at 509 to 533 shows a compositional bias: low complexity; it reads PRSSGGTPLHSPLHTPRASPTGTPG. Arg525 bears the Omega-N-methylarginine mark. A phosphothreonine mark is found at Thr529 and Thr535. Arg550 is subject to Omega-N-methylarginine. A disordered region spans residues 560–588; it reads FLGSPRFHRRKMQVPTAEEMSSLTPESSP. Thr583 bears the Phosphothreonine mark. Residues Ser586, Ser587, and Ser601 each carry the phosphoserine modification. A disordered region spans residues 719–778; it reads QPSVQALADEKNGAQTRPAGTPPRSLQPPPGRSDPDLSSSPRRGPPKDKKLLATNGTPLP.

Belongs to the protein kinase superfamily. CAMK Ser/Thr protein kinase family. SNF1 subfamily. Requires Mg(2+) as cofactor. Phosphorylated at Thr-189 by STK11/LKB1 in complex with STE20-related adapter-alpha (STRADA) pseudo kinase and CAB39. Not phosphorylated at Thr-189 by CaMKK2. In contrast, it is phosphorylated and activated by CaMKK1. May be inactivated via dephosphorylation of Thr-189 by PP2C. In terms of tissue distribution, present in the gray matter of the brain and spinal cord (at protein level). Expressed in the nervous system, distributed within the brain and spinal cord of embryonic and postnatal animals.

The protein resides in the cytoplasm. Its subcellular location is the nucleus. The protein localises to the cytoskeleton. It localises to the microtubule organizing center. It is found in the centrosome. The protein resides in the synapse. Its subcellular location is the presynaptic active zone. The protein localises to the cytoplasmic vesicle. It localises to the secretory vesicle. It is found in the synaptic vesicle. The catalysed reaction is L-seryl-[protein] + ATP = O-phospho-L-seryl-[protein] + ADP + H(+). It catalyses the reaction L-threonyl-[protein] + ATP = O-phospho-L-threonyl-[protein] + ADP + H(+). The enzyme catalyses L-seryl-[tau protein] + ATP = O-phospho-L-seryl-[tau protein] + ADP + H(+). It carries out the reaction L-threonyl-[tau protein] + ATP = O-phospho-L-threonyl-[tau protein] + ADP + H(+). Its activity is regulated as follows. Activated by phosphorylation on Thr-189 by STK11/LKB1. Functionally, serine/threonine-protein kinase that plays a key role in polarization of neurons and centrosome duplication. Phosphorylates CDC25B, CDC25C, MAPT/TAU, RIMS1, TUBG1, TUBG2 and WEE1. Following phosphorylation and activation by STK11/LKB1, acts as a key regulator of polarization of cortical neurons, probably by mediating phosphorylation of microtubule-associated proteins such as MAPT/TAU at 'Thr-504' and 'Ser-554'. Also regulates neuron polarization by mediating phosphorylation of WEE1 at 'Ser-642' in postmitotic neurons, leading to down-regulate WEE1 activity in polarized neurons. In neurons, localizes to synaptic vesicles and plays a role in neurotransmitter release, possibly by phosphorylating RIMS1. Also acts as a positive regulator of centrosome duplication by mediating phosphorylation of gamma-tubulin (TUBG1 and TUBG2) at 'Ser-131', leading to translocation of gamma-tubulin and its associated proteins to the centrosome. Involved in the UV-induced DNA damage checkpoint response, probably by inhibiting CDK1 activity through phosphorylation and activation of WEE1, and inhibition of CDC25B and CDC25C. In Mus musculus (Mouse), this protein is Serine/threonine-protein kinase BRSK1 (Brsk1).